The chain runs to 307 residues: Delta-9 acyl-lipid desaturase 2 (307 aa).

Residues 1–17 (MSVTSTVEENHQKNPST) show a composition bias toward polar residues. The interval 1–21 (MSVTSTVEENHQKNPSTPAAV) is disordered. The chain crosses the membrane as a helical span at residues 53-73 (LALLAPFYFTWSALWVTFLFY). Fe cation contacts are provided by His-85 and His-90. The Histidine box-1 motif lies at 85–90 (HRNLAH). Residues 99 to 119 (LEYLLAYCALLAIQGDPIDWV) traverse the membrane as a helical segment. Fe cation is bound by residues His-122, His-125, and His-126. The Histidine box-2 signature appears at 122-126 (HRYHH). 2 helical membrane passes run 182–202 (VLFHILGLGFFLFYLGGMSFV) and 204–224 (WGMGVGAALEVHVTCLINSLC). His-225, His-254, His-257, and His-258 together coordinate Fe cation. A Histidine box-3 motif is present at residues 254 to 258 (HNNHH).

It belongs to the fatty acid desaturase type 1 family. Requires Fe cation as cofactor. In terms of tissue distribution, strongly expressed in flowers, roots, leaves, seedpods, and inflorescence meristems.

It localises to the endoplasmic reticulum membrane. The enzyme catalyses a 1-hexacosanoyl-2-acyl-phosphoglycerolipid + 2 Fe(II)-[cytochrome b5] + O2 + 2 H(+) = a 1-[(17Z)-hexacos-17-enoyl]-2-acyl-phosphoglycerolipid + 2 Fe(III)-[cytochrome b5] + 2 H2O. It carries out the reaction a 1-tetracosanoyl-2-acyl-phosphoglycerolipid + 2 Fe(II)-[cytochrome b5] + O2 + 2 H(+) = a 1-[(15Z)-tetracos-15-enoyl]-2-acyl-phosphoglycerolipid + 2 Fe(III)-[cytochrome b5] + 2 H2O. The protein operates within lipid metabolism; polyunsaturated fatty acid biosynthesis. In terms of biological role, involved in delta-9 desaturation of fatty acids. Plays a role in the production of very-long-chain monounsaturated fatty acids (VLCMUFAs) in seed lipids and in membrane phospholipids and sphingolipids. Acts as C-16:0 desaturase for monogalactosyl diacylglycerol (MGDG) and phosphatidylglycerol (PG). Is an essential component for cold adaptation. Is essential to adjust the acyl composition of organelle membrane lipid composition in response to cold stress. This is Delta-9 acyl-lipid desaturase 2 from Arabidopsis thaliana (Mouse-ear cress).